The chain runs to 134 residues: Putative transposase InsN for insertion sequence element IS911A (134 aa).

Belongs to the transposase 8 family.

Functionally, involved in the transposition of the insertion sequence IS911. This Escherichia coli (strain K12) protein is Putative transposase InsN for insertion sequence element IS911A (insN1).